We begin with the raw amino-acid sequence, 322 residues long: Acetyl-coenzyme A carboxylase carboxyl transferase subunit alpha (322 aa).

In terms of domain architecture, CoA carboxyltransferase C-terminal spans 32-293 (DISEEIARLE…KRALQDALRQ (262 aa)).

It belongs to the AccA family. As to quaternary structure, acetyl-CoA carboxylase is a heterohexamer composed of biotin carboxyl carrier protein (AccB), biotin carboxylase (AccC) and two subunits each of ACCase subunit alpha (AccA) and ACCase subunit beta (AccD).

Its subcellular location is the cytoplasm. It carries out the reaction N(6)-carboxybiotinyl-L-lysyl-[protein] + acetyl-CoA = N(6)-biotinyl-L-lysyl-[protein] + malonyl-CoA. The protein operates within lipid metabolism; malonyl-CoA biosynthesis; malonyl-CoA from acetyl-CoA: step 1/1. Functionally, component of the acetyl coenzyme A carboxylase (ACC) complex. First, biotin carboxylase catalyzes the carboxylation of biotin on its carrier protein (BCCP) and then the CO(2) group is transferred by the carboxyltransferase to acetyl-CoA to form malonyl-CoA. The polypeptide is Acetyl-coenzyme A carboxylase carboxyl transferase subunit alpha (Aromatoleum aromaticum (strain DSM 19018 / LMG 30748 / EbN1) (Azoarcus sp. (strain EbN1))).